Reading from the N-terminus, the 121-residue chain is Basic phospholipase A2 homolog zhaoermiatoxin (121 aa).

7 cysteine pairs are disulfide-bonded: Cys26-Cys115, Cys28-Cys44, Cys43-Cys95, Cys49-Cys121, Cys50-Cys88, Cys57-Cys81, and Cys75-Cys86.

It belongs to the phospholipase A2 family. Group II subfamily. R49 sub-subfamily. In terms of assembly, homodimer. In terms of tissue distribution, expressed by the venom gland.

It localises to the secreted. In terms of biological role, snake venom phospholipase A2 homolog that induces myonecrosis, and edema. Has low myotoxic activity. The chain is Basic phospholipase A2 homolog zhaoermiatoxin from Protobothrops mangshanensis (Mangshan pitviper).